We begin with the raw amino-acid sequence, 106 residues long: Iron-sulfur cluster assembly protein CyaY (106 aa).

It belongs to the frataxin family.

Involved in iron-sulfur (Fe-S) cluster assembly. May act as a regulator of Fe-S biogenesis. The sequence is that of Iron-sulfur cluster assembly protein CyaY from Cronobacter sakazakii (strain ATCC BAA-894) (Enterobacter sakazakii).